A 555-amino-acid polypeptide reads, in one-letter code: T-complex protein 1 subunit eta (555 aa).

Belongs to the TCP-1 chaperonin family. Heterooligomeric complex of about 850 to 900 kDa that forms two stacked rings, 12 to 16 nm in diameter.

The protein localises to the cytoplasm. Its function is as follows. Molecular chaperone; assists the folding of proteins upon ATP hydrolysis. Known to play a role, in vitro, in the folding of actin and tubulin. The protein is T-complex protein 1 subunit eta (cct7) of Dictyostelium discoideum (Social amoeba).